We begin with the raw amino-acid sequence, 336 residues long: Acyl-CoA-binding domain-containing protein 4 (336 aa).

Residues 12–32 traverse the membrane as a helical; Signal-anchor segment; sequence AVIGLLFAFLVAKLISTVIAF. The tract at residues 40 to 88 is disordered; it reads TRSTPTSPSAADTPAAPAPPPASLDGGHGDTSDGSGSDSDSDWEGVEST. Positions 42–54 are enriched in low complexity; sequence STPTSPSAADTPA. Acidic residues predominate over residues 78–88; sequence SDSDWEGVEST. The 89-residue stretch at 90 to 178 folds into the ACB domain; the sequence is LDEEFSAASA…VDELFPNWSM (89 aa). An acyl-CoA is bound by residues 120–124, Lys142, Lys146, and Tyr165; that span reads YGLYK. Asn175 is a glycosylation site (N-linked (GlcNAc...) asparagine). Positions 179-202 are disordered; sequence GSSTKRKDEDTTVSASSSKGPMGP. An N-linked (GlcNAc...) asparagine glycan is attached at Asn216. ANK repeat units follow at residues 251-280 and 284-313; these read EGRT…DVNA and EGQT…DVQI.

The protein belongs to the ACBP family. As to expression, highly expressed in leaves. Expressed at low levels in roots and seeds.

It localises to the endoplasmic reticulum membrane. Binds medium- and long-chain acyl-CoA esters with high affinity. Can interact in vitro with palmitoyl-CoA, linoleoyl-CoA and linolenoyl-CoA. Binds phosphatidic acid (PA) and phosphatidylcholine (PC) in vitro. May play a role in the biosynthesis of phospholipids. The sequence is that of Acyl-CoA-binding domain-containing protein 4 from Oryza sativa subsp. japonica (Rice).